Reading from the N-terminus, the 386-residue chain is Succinate--CoA ligase [ADP-forming] subunit beta (386 aa).

One can recognise an ATP-grasp domain in the interval 9–244 (KEIFRKYGVP…LAEEEPREIQ (236 aa)). Residues K46, 53–55 (GRG), E99, L102, and E107 contribute to the ATP site. Residues N199 and D213 each coordinate Mg(2+). Residues N264 and 321-323 (GIM) contribute to the substrate site.

Belongs to the succinate/malate CoA ligase beta subunit family. As to quaternary structure, heterotetramer of two alpha and two beta subunits. Requires Mg(2+) as cofactor.

The enzyme catalyses succinate + ATP + CoA = succinyl-CoA + ADP + phosphate. It carries out the reaction GTP + succinate + CoA = succinyl-CoA + GDP + phosphate. It functions in the pathway carbohydrate metabolism; tricarboxylic acid cycle; succinate from succinyl-CoA (ligase route): step 1/1. In terms of biological role, succinyl-CoA synthetase functions in the citric acid cycle (TCA), coupling the hydrolysis of succinyl-CoA to the synthesis of either ATP or GTP and thus represents the only step of substrate-level phosphorylation in the TCA. The beta subunit provides nucleotide specificity of the enzyme and binds the substrate succinate, while the binding sites for coenzyme A and phosphate are found in the alpha subunit. In Myxococcus xanthus (strain DK1622), this protein is Succinate--CoA ligase [ADP-forming] subunit beta.